The sequence spans 435 residues: tRNA modification GTPase MnmE (435 aa).

Arg-24, Glu-85, and Arg-124 together coordinate (6S)-5-formyl-5,6,7,8-tetrahydrofolate. Residues 220–361 enclose the TrmE-type G domain; that stretch reads GLVFTIVGAP…LRTALAERAR (142 aa). A K(+)-binding site is contributed by Asn-230. GTP is bound by residues 230–235, 249–255, and 274–277; these read NVGKSS, SAIAGTT, and DTAG. Mg(2+) is bound at residue Ser-234. 3 residues coordinate K(+): Ser-249, Ile-251, and Thr-254. A Mg(2+)-binding site is contributed by Thr-255. Residue Lys-435 participates in (6S)-5-formyl-5,6,7,8-tetrahydrofolate binding.

It belongs to the TRAFAC class TrmE-Era-EngA-EngB-Septin-like GTPase superfamily. TrmE GTPase family. As to quaternary structure, homodimer. Heterotetramer of two MnmE and two MnmG subunits. K(+) serves as cofactor.

The protein localises to the cytoplasm. Functionally, exhibits a very high intrinsic GTPase hydrolysis rate. Involved in the addition of a carboxymethylaminomethyl (cmnm) group at the wobble position (U34) of certain tRNAs, forming tRNA-cmnm(5)s(2)U34. This is tRNA modification GTPase MnmE from Gluconacetobacter diazotrophicus (strain ATCC 49037 / DSM 5601 / CCUG 37298 / CIP 103539 / LMG 7603 / PAl5).